Consider the following 294-residue polypeptide: Melanocortin receptor 5 (294 aa).

Topologically, residues 1-29 (FLDLQLNATEGNVSGPSVGNTSSPCEDMG) are extracellular. N-linked (GlcNAc...) asparagine glycosylation is found at Asn-7, Asn-12, and Asn-20. A helical transmembrane segment spans residues 30–53 (IEVEVFLTLGLISLLENILVIGAI). Over 54–65 (ARNKNLHVPMYF) the chain is Cytoplasmic. A helical membrane pass occupies residues 66–89 (FVCSLAVADMLVSLSNSWETITIY). At 90-106 (LIANKHLVLSDTSVRHL) the chain is on the extracellular side. Residues 107 to 130 (DNVFDSMICISLVASMCSLLAVAV) traverse the membrane as a helical segment. The Cytoplasmic segment spans residues 131-147 (DRYVTIFYALRYQHLMT). A helical membrane pass occupies residues 148–171 (GRRCGAIIAGIWALCTGCGPVFIV). Residues 172 to 178 (YYESTYV) are Extracellular-facing. A helical transmembrane segment spans residues 179–203 (VVCLVAMFLTMLLLMASLYAHMFLQ). Topologically, residues 204–231 (ARAHVRRIAALPGYRSARQRTSMKGAVT) are cytoplasmic. The chain crosses the membrane as a helical span at residues 232-257 (LAMLLGVFIVCWAPFFLHLILMISCP). At 258–265 (QNLYCSCF) the chain is on the extracellular side. A helical membrane pass occupies residues 266-289 (MSHFNMYLILIMCNSVIDPLIYAF). Topologically, residues 290–294 (RSQEK) are cytoplasmic.

It belongs to the G-protein coupled receptor 1 family.

It is found in the cell membrane. Its function is as follows. Receptor for MSH (alpha, beta and gamma) and ACTH. The activity of this receptor is mediated by G proteins which activate adenylate cyclase. This receptor is a possible mediator of the immunomodulation properties of melanocortins. This is Melanocortin receptor 5 (MC5R) from Sus scrofa (Pig).